Here is a 115-residue protein sequence, read N- to C-terminus: Large ribosomal subunit protein bL19 (115 aa).

It belongs to the bacterial ribosomal protein bL19 family.

In terms of biological role, this protein is located at the 30S-50S ribosomal subunit interface and may play a role in the structure and function of the aminoacyl-tRNA binding site. This chain is Large ribosomal subunit protein bL19, found in Streptococcus pneumoniae (strain JJA).